The primary structure comprises 118 residues: Flowering-promoting factor 1-like protein 4 (118 aa).

It belongs to the FPF1 family.

This is Flowering-promoting factor 1-like protein 4 from Oryza sativa subsp. japonica (Rice).